An 808-amino-acid chain; its full sequence is Digalactosyldiacylglycerol synthase 1, chloroplastic (808 aa).

The disordered stretch occupies residues M1 to S23. The transit peptide at M1–R58 directs the protein to the chloroplast. A compositionally biased stretch (low complexity) spans S10–S23.

The protein belongs to the glycosyltransferase group 1 family. Glycosyltransferase 4 subfamily.

Its subcellular location is the plastid. The protein resides in the chloroplast outer membrane. The enzyme catalyses a 1,2-diacyl-3-O-(beta-D-galactosyl)-sn-glycerol + UDP-alpha-D-galactose = a 1,2-diacyl-3-O-[alpha-D-galactosyl-(1-&gt;6)-beta-D-galactosyl]-sn-glycerol + UDP + H(+). Functionally, involved in the synthesis of diacylglycerol galactolipids that are specifically found in thylakoid membranes. Specific for alpha-glycosidic linkages. Responsible for the final assembly of galactolipids in photosynthetic membranes. Digalactosyldiacylglycerol (DGDG) provides stability to the photosystem I (PSI) complex, especially to the PsaA, PsaB, PsaC, PsaL and PsaH subunits. The protein is Digalactosyldiacylglycerol synthase 1, chloroplastic of Arabidopsis thaliana (Mouse-ear cress).